Consider the following 225-residue polypeptide: Orotate phosphoribosyltransferase (225 aa).

A 5-phospho-alpha-D-ribose 1-diphosphate-binding site is contributed by Lys-29. 37–38 (FF) provides a ligand contact to orotate. 5-phospho-alpha-D-ribose 1-diphosphate-binding positions include 75–76 (YK), Arg-105, Lys-106, Lys-109, His-111, and 130–138 (DDVITAGTS). Orotate contacts are provided by Thr-134 and Arg-162.

It belongs to the purine/pyrimidine phosphoribosyltransferase family. PyrE subfamily. As to quaternary structure, homodimer. Mg(2+) serves as cofactor.

It catalyses the reaction orotidine 5'-phosphate + diphosphate = orotate + 5-phospho-alpha-D-ribose 1-diphosphate. Its pathway is pyrimidine metabolism; UMP biosynthesis via de novo pathway; UMP from orotate: step 1/2. Catalyzes the transfer of a ribosyl phosphate group from 5-phosphoribose 1-diphosphate to orotate, leading to the formation of orotidine monophosphate (OMP). This Bordetella petrii (strain ATCC BAA-461 / DSM 12804 / CCUG 43448) protein is Orotate phosphoribosyltransferase.